Reading from the N-terminus, the 288-residue chain is Bifunctional protein FolD (288 aa).

Residues 166–168 (GRS), S191, and I232 each bind NADP(+).

It belongs to the tetrahydrofolate dehydrogenase/cyclohydrolase family. In terms of assembly, homodimer.

It carries out the reaction (6R)-5,10-methylene-5,6,7,8-tetrahydrofolate + NADP(+) = (6R)-5,10-methenyltetrahydrofolate + NADPH. The enzyme catalyses (6R)-5,10-methenyltetrahydrofolate + H2O = (6R)-10-formyltetrahydrofolate + H(+). The protein operates within one-carbon metabolism; tetrahydrofolate interconversion. Its function is as follows. Catalyzes the oxidation of 5,10-methylenetetrahydrofolate to 5,10-methenyltetrahydrofolate and then the hydrolysis of 5,10-methenyltetrahydrofolate to 10-formyltetrahydrofolate. This chain is Bifunctional protein FolD, found in Rickettsia massiliae (strain Mtu5).